Reading from the N-terminus, the 618-residue chain is uncharacterized protein (618 aa).

This sequence to Rhizobium NGR234A y4qD.

This is an uncharacterized protein from Sinorhizobium fredii (strain NBRC 101917 / NGR234).